We begin with the raw amino-acid sequence, 348 residues long: Uroporphyrinogen decarboxylase (348 aa).

Substrate-binding positions include 27 to 31, Phe-46, Asp-76, Tyr-152, Ser-207, and His-320; that span reads RQAGR.

This sequence belongs to the uroporphyrinogen decarboxylase family. Homodimer.

The protein resides in the cytoplasm. It catalyses the reaction uroporphyrinogen III + 4 H(+) = coproporphyrinogen III + 4 CO2. Its pathway is porphyrin-containing compound metabolism; protoporphyrin-IX biosynthesis; coproporphyrinogen-III from 5-aminolevulinate: step 4/4. Catalyzes the decarboxylation of four acetate groups of uroporphyrinogen-III to yield coproporphyrinogen-III. The chain is Uroporphyrinogen decarboxylase from Bacillus cereus (strain G9842).